Reading from the N-terminus, the 791-residue chain is Lon protease (791 aa).

One can recognise a Lon N-terminal domain in the interval 28–223; sequence LPVVVISEIM…YILQDIQSLL (196 aa). 374–381 lines the ATP pocket; the sequence is GPPGVGKT. Positions 610–791 constitute a Lon proteolytic domain; sequence KEKIGSTNGL…SDVFSQVFVV (182 aa). Catalysis depends on residues Ser697 and Lys740.

The protein belongs to the peptidase S16 family. In terms of assembly, homohexamer. Organized in a ring with a central cavity.

The protein resides in the cytoplasm. It catalyses the reaction Hydrolysis of proteins in presence of ATP.. Its function is as follows. ATP-dependent serine protease that mediates the selective degradation of mutant and abnormal proteins as well as certain short-lived regulatory proteins. Required for cellular homeostasis and for survival from DNA damage and developmental changes induced by stress. Degrades polypeptides processively to yield small peptide fragments that are 5 to 10 amino acids long. Binds to DNA in a double-stranded, site-specific manner. This Aster yellows witches'-broom phytoplasma (strain AYWB) protein is Lon protease.